We begin with the raw amino-acid sequence, 505 residues long: Protein dml1 (505 aa).

A disordered region spans residues 330-358 (LPEDMSNHTQPVQNPEDRRTQASKGGSSK).

This sequence belongs to the misato family.

It is found in the mitochondrion. Its function is as follows. Involved in the partitioning of the mitochondrial organelle and mitochondrial DNA (mtDNA) inheritance. The protein is Protein dml1 (dml1) of Aspergillus fumigatus (strain ATCC MYA-4609 / CBS 101355 / FGSC A1100 / Af293) (Neosartorya fumigata).